The primary structure comprises 176 residues: Probable DNA-directed RNA polymerase subunit delta (176 aa).

An HTH HARE-type domain is found at 14–81; the sequence is CSMIEVVHSV…GENRWGLRSW (68 aa). The segment at 91 to 176 is disordered; sequence ILPQPKPKKK…ETEEEEEEEL (86 aa). Residues 106–176 show a composition bias toward acidic residues; that stretch reads DGFDDYIEED…ETEEEEEEEL (71 aa).

Belongs to the RpoE family. In terms of assembly, RNAP is composed of a core of 2 alpha, a beta and a beta' subunits. The core is associated with a delta subunit and one of several sigma factors.

In terms of biological role, participates in both the initiation and recycling phases of transcription. In the presence of the delta subunit, RNAP displays an increased specificity of transcription, a decreased affinity for nucleic acids, and an increased efficiency of RNA synthesis because of enhanced recycling. In Bacillus thuringiensis (strain Al Hakam), this protein is Probable DNA-directed RNA polymerase subunit delta.